The chain runs to 254 residues: Phosphoribosylaminoimidazole-succinocarboxamide synthase (254 aa).

The protein belongs to the SAICAR synthetase family.

The enzyme catalyses 5-amino-1-(5-phospho-D-ribosyl)imidazole-4-carboxylate + L-aspartate + ATP = (2S)-2-[5-amino-1-(5-phospho-beta-D-ribosyl)imidazole-4-carboxamido]succinate + ADP + phosphate + 2 H(+). The protein operates within purine metabolism; IMP biosynthesis via de novo pathway; 5-amino-1-(5-phospho-D-ribosyl)imidazole-4-carboxamide from 5-amino-1-(5-phospho-D-ribosyl)imidazole-4-carboxylate: step 1/2. In Sinorhizobium fredii (strain NBRC 101917 / NGR234), this protein is Phosphoribosylaminoimidazole-succinocarboxamide synthase.